The sequence spans 271 residues: Phosphatidylinositol transfer protein beta isoform (271 aa).

Lys-215 is modified (N6-acetyllysine). Ser-262 bears the Phosphoserine; by PKC mark.

It belongs to the PtdIns transfer protein family. PI transfer class I subfamily. Post-translationally, constitutive phosphorylation of Ser-262 has no effect on phospholipid transfer activity but is required for Golgi targeting.

The protein resides in the golgi apparatus. It is found in the golgi apparatus membrane. It localises to the endoplasmic reticulum membrane. It carries out the reaction a 1,2-diacyl-sn-glycero-3-phosphocholine(in) = a 1,2-diacyl-sn-glycero-3-phosphocholine(out). The enzyme catalyses a 1,2-diacyl-sn-glycero-3-phospho-(1D-myo-inositol)(in) = a 1,2-diacyl-sn-glycero-3-phospho-(1D-myo-inositol)(out). It catalyses the reaction an N-(acyl)-sphingosylphosphocholine(in) = an N-(acyl)-sphingosylphosphocholine(out). Its function is as follows. Catalyzes the transfer of phosphatidylinositol, phosphatidylcholine and sphingomyelin between membranes. Required for COPI-mediated retrograde transport from the Golgi to the endoplasmic reticulum; phosphatidylinositol and phosphatidylcholine transfer activity is essential for this function. This Mus musculus (Mouse) protein is Phosphatidylinositol transfer protein beta isoform (Pitpnb).